Reading from the N-terminus, the 183-residue chain is MVQAWYMDSDTTTDQREEHQLDPPVPVSIDEVRDKSGVLYWKLNADTYEQDGELEKIRKDRGYSYTDVIEISRDKLPNYEDKIKTFFQEHLHSDEEIRFILAGSGYFDVRDCEDKWIRIQVTRGDLLVLPAGIYHRFTLDKQNYIKAMRLFVGEPVWTPINRPADEHPARFQYIESLRQGIMV.

Residues methionine 1–leucine 21 form a disordered region. The Fe(2+) site is built by histidine 90, histidine 92, glutamate 96, and histidine 135. Ni(2+)-binding residues include histidine 90, histidine 92, glutamate 96, and histidine 135.

The protein belongs to the acireductone dioxygenase (ARD) family. It depends on Fe(2+) as a cofactor. Requires Ni(2+) as cofactor.

It localises to the cytoplasm. The protein localises to the nucleus. The enzyme catalyses 1,2-dihydroxy-5-(methylsulfanyl)pent-1-en-3-one + O2 = 4-methylsulfanyl-2-oxobutanoate + formate + 2 H(+). It catalyses the reaction 1,2-dihydroxy-5-(methylsulfanyl)pent-1-en-3-one + O2 = 3-(methylsulfanyl)propanoate + CO + formate + 2 H(+). It participates in amino-acid biosynthesis; L-methionine biosynthesis via salvage pathway; L-methionine from S-methyl-5-thio-alpha-D-ribose 1-phosphate: step 5/6. In terms of biological role, catalyzes 2 different reactions between oxygen and the acireductone 1,2-dihydroxy-3-keto-5-methylthiopentene (DHK-MTPene) depending upon the metal bound in the active site. Fe-containing acireductone dioxygenase (Fe-ARD) produces formate and 2-keto-4-methylthiobutyrate (KMTB), the alpha-ketoacid precursor of methionine in the methionine recycle pathway. Ni-containing acireductone dioxygenase (Ni-ARD) produces methylthiopropionate, carbon monoxide and formate, and does not lie on the methionine recycle pathway. In Ixodes scapularis (Black-legged tick), this protein is Acireductone dioxygenase.